A 66-amino-acid chain; its full sequence is DNA gyrase inhibitor YacG (66 aa).

Zn(2+) is bound by residues cysteine 9, cysteine 12, cysteine 28, and cysteine 32. The segment at histidine 45–histidine 66 is disordered.

Belongs to the DNA gyrase inhibitor YacG family. In terms of assembly, interacts with GyrB. Zn(2+) is required as a cofactor.

Inhibits all the catalytic activities of DNA gyrase by preventing its interaction with DNA. Acts by binding directly to the C-terminal domain of GyrB, which probably disrupts DNA binding by the gyrase. The polypeptide is DNA gyrase inhibitor YacG (Pseudomonas putida (strain W619)).